The following is a 108-amino-acid chain: Small proline-rich protein 5 (108 aa).

Residues 1 to 13 (MSQQKQKQCAPPQ) show a composition bias toward low complexity. Disordered stretches follow at residues 1–24 (MSQQ…QRCP) and 73–108 (PPPQ…SKQK). Pro residues-rich tracts occupy residues 14 to 24 (QCCPPPQQRCP) and 73 to 100 (PPPQ…PPPQ).

Functionally, positively regulates keratinocyte differentiation by inducing genes associated with epidermal differentiation. This chain is Small proline-rich protein 5, found in Homo sapiens (Human).